Reading from the N-terminus, the 27-residue chain is Toxin TdII-4 (27 aa).

Residues 1-27 (KDGYLMEPNGCKLGCLTRPAKYCWXEE) form the LCN-type CS-alpha/beta domain.

This sequence belongs to the long (4 C-C) scorpion toxin superfamily. Sodium channel inhibitor family. Beta subfamily. As to expression, expressed by the venom gland.

It is found in the secreted. Functionally, beta toxins bind voltage-independently at site-4 of sodium channels (Nav) and shift the voltage of activation toward more negative potentials thereby affecting sodium channel activation and promoting spontaneous and repetitive firing. This toxin is active against mammals and also affects neuromuscular preparations of frog. The sequence is that of Toxin TdII-4 from Tityus discrepans (Venezuelan scorpion).